The chain runs to 463 residues: MEITPARGGLNRAHLQCRNLQEFLGGLSPGVLDRLYGHPATCLAVFRELPSLAKNWVMRMLFLEQPLPQAAVALWVKKEFSKAQEESTGLLSGLRIWHTQLLPGGLQGLILNPVFRQNLRIALLGGGKAWSDDTSQLGPDKHARDVPSLDKYAEERWEVVLHFMVGSPSAAVSQDLAQLLSQAGLMKSTEPGEPPCITSAGFQFLLLDTPAQLWYFMLQYLQTAQSRGMDLVEILSFLFQLSFSTLGKDYSVEGMSDSLLNFLQHLREFGLVFQRKRKSRRYYPTRLAINLSSGVSGAGGTVHQPGFIVVETNYRLYAYTESELQIALIALFSEMLYRFPNMVVAQVTRESVQQAIASGITAQQIIHFLRTRAHPVMLKQNPVLPPTITDQIRLWELERDRLRFTEGVLYNQFLSQVDFELLLAHARELGVLVFENSAKRLMVVTPAGHSDVKRFWKRQKHSS.

This sequence belongs to the TFB2 family. As to quaternary structure, component of the 7-subunit TFIIH core complex composed of XPB/ERCC3, XPD/ERCC2, GTF2H1, GTF2H2, GTF2H3, GTF2H4 and GTF2H5, which is active in NER. The core complex associates with the 3-subunit CDK-activating kinase (CAK) module composed of CCNH/cyclin H, CDK7 and MNAT1 to form the 10-subunit holoenzyme (holo-TFIIH) active in transcription. Part of TBP-based Pol II pre-initiation complex (PIC), in which Pol II core assembles with general transcription factors and other specific initiation factors including GTF2E1, GTF2E2, GTF2F1, GTF2F2, TCEA1, ERCC2, ERCC3, GTF2H2, GTF2H3, GTF2H4, GTF2H5, GTF2A1, GTF2A2, GTF2B and TBP; this large multi-subunit PIC complex mediates DNA unwinding and targets Pol II core to the transcription start site where the first phosphodiester bond forms.

The protein resides in the nucleus. In terms of biological role, component of the general transcription and DNA repair factor IIH (TFIIH) core complex, which is involved in general and transcription-coupled nucleotide excision repair (NER) of damaged DNA and, when complexed to CAK, in RNA transcription by RNA polymerase II. In NER, TFIIH acts by opening DNA around the lesion to allow the excision of the damaged oligonucleotide and its replacement by a new DNA fragment. In transcription, TFIIH has an essential role in transcription initiation. When the pre-initiation complex (PIC) has been established, TFIIH is required for promoter opening and promoter escape. Phosphorylation of the C-terminal tail (CTD) of the largest subunit of RNA polymerase II by the kinase module CAK controls the initiation of transcription. This is General transcription factor IIH subunit 4 (Gtf2h4) from Mus musculus (Mouse).